We begin with the raw amino-acid sequence, 499 residues long: Laccase (499 aa).

Plastocyanin-like domains are found at residues 2 to 127 and 139 to 281; these read VGPV…FVVY and VDND…ILRY. 2 N-linked (GlcNAc...) asparagine glycosylation sites follow: N51 and N54. 4 residues coordinate Cu cation: H64, H66, H109, and H111. 2 disulfides stabilise this stretch: C85–C488 and C117–C205. Y196 carries the 3'-nitrotyrosine modification. Residues N208, N217, N292, and N333 are each glycosylated (N-linked (GlcNAc...) asparagine). One can recognise a Plastocyanin-like 3 domain in the interval 348–470; it reads SVPVLLQILS…GGFAVVQAED (123 aa). Y372 bears the 3'-nitrotyrosine mark. A glycan (N-linked (GlcNAc...) asparagine) is linked at N377. Residues H395, H398, and H400 each contribute to the Cu cation site. 2 N-linked (GlcNAc...) asparagine glycosylation sites follow: N416 and N436. Cu cation-binding residues include H452, C453, H454, and H458.

This sequence belongs to the multicopper oxidase family. Cu cation serves as cofactor.

It localises to the secreted. It carries out the reaction 4 hydroquinone + O2 = 4 benzosemiquinone + 2 H2O. Functionally, lignin degradation and detoxification of lignin-derived products. The polypeptide is Laccase (Trametes maxima (White-rot fungus)).